The following is a 506-amino-acid chain: Aminoaldehyde dehydrogenase 2 (506 aa).

Residue Asp-101 coordinates Na(+). Residues Thr-161–Trp-163 and Lys-187–Glu-190 contribute to the NAD(+) site. Leu-191 provides a ligand contact to Na(+). NAD(+) is bound by residues Ser-241–Thr-244 and Glu-262. The active-site Proton acceptor is the Glu-262. Catalysis depends on Cys-297, which acts as the Nucleophile. NAD(+) is bound by residues Glu-396 and Trp-462.

The protein belongs to the aldehyde dehydrogenase family.

It catalyses the reaction 4-aminobutanal + NAD(+) + H2O = 4-aminobutanoate + NADH + 2 H(+). It carries out the reaction 3-aminopropanal + NAD(+) + H2O = beta-alanine + NADH + 2 H(+). The catalysed reaction is 4-(trimethylamino)butanal + NAD(+) + H2O = 4-(trimethylamino)butanoate + NADH + 2 H(+). The enzyme catalyses 4-guanidinobutanal + NAD(+) + H2O = 4-guanidinobutanoate + NADH + 2 H(+). The protein operates within amine and polyamine biosynthesis; betaine biosynthesis via choline pathway; betaine from betaine aldehyde: step 1/1. Functionally, dehydrogenase that catalyzes the oxidation of several aminoaldehydes. Metabolizes and detoxifies aldehyde products of polyamine degradation to non-toxic amino acids. Catalyzes the oxidation of 4-aminobutanal and 3-aminopropanal to 4-aminobutanoate and beta-alanine, respectively. Catalyzes the oxidation of 4-(trimethylamino)butanal and 4-guanidinobutanal to 4-trimethylammoniobutanoate and 4-guanidinobutanoate, respectively. The polypeptide is Aminoaldehyde dehydrogenase 2 (Zea mays (Maize)).